Here is a 76-residue protein sequence, read N- to C-terminus: Conotoxin VnMSGL-0112 (76 aa).

An N-terminal signal peptide occupies residues 1 to 20 (MSGLGIMVLTLLLLVSMATS). Positions 21–45 (HQDGRGKQATQRDAINVRRRRSITR) are excised as a propeptide. Disulfide bonds link Cys-49–Cys-61, Cys-53–Cys-70, and Cys-60–Cys-74.

Belongs to the conotoxin O3 superfamily. In terms of tissue distribution, expressed by the venom duct.

Its subcellular location is the secreted. The protein is Conotoxin VnMSGL-0112 of Conus ventricosus (Mediterranean cone).